Consider the following 883-residue polypeptide: Valine--tRNA ligase (883 aa).

Residues 46-56 carry the 'HIGH' region motif; it reads PNVTGKLHLGH. The short motif at 520–524 is the 'KMSKS' region element; it reads KMSKS. ATP is bound at residue Lys523. Positions 809 to 844 form a coiled coil; it reads LADLLNVEEELARLEKELAKWQKELDMVGKKLSNER.

This sequence belongs to the class-I aminoacyl-tRNA synthetase family. ValS type 1 subfamily. As to quaternary structure, monomer.

Its subcellular location is the cytoplasm. The catalysed reaction is tRNA(Val) + L-valine + ATP = L-valyl-tRNA(Val) + AMP + diphosphate. Catalyzes the attachment of valine to tRNA(Val). As ValRS can inadvertently accommodate and process structurally similar amino acids such as threonine, to avoid such errors, it has a 'posttransfer' editing activity that hydrolyzes mischarged Thr-tRNA(Val) in a tRNA-dependent manner. This is Valine--tRNA ligase from Streptococcus agalactiae serotype V (strain ATCC BAA-611 / 2603 V/R).